The following is a 511-amino-acid chain: Myrosinase 5 (511 aa).

The N-terminal stretch at 1–23 (MAIPKAHYSLAVLVLLFVVVSSS) is a signal peptide. 3 cysteine pairs are disulfide-bonded: cysteine 31-cysteine 450, cysteine 39-cysteine 445, and cysteine 230-cysteine 233. 2 N-linked (GlcNAc...) asparagine glycosylation sites follow: asparagine 46 and asparagine 53. A beta-D-glucoside-binding positions include glutamine 64, histidine 165, and 210–211 (NQ). Residue asparagine 222 is glycosylated (N-linked (GlcNAc...) asparagine). Residues tyrosine 351 and glutamate 418 each contribute to the a beta-D-glucoside site. Glutamate 418 serves as the catalytic Nucleophile. N-linked (GlcNAc...) asparagine glycosylation occurs at asparagine 428. Residues tryptophan 467, 474–475 (EF), and phenylalanine 483 contribute to the a beta-D-glucoside site. Asparagine 489 carries N-linked (GlcNAc...) asparagine glycosylation.

The protein belongs to the glycosyl hydrolase 1 family. Specifically expressed in roots.

It catalyses the reaction a thioglucoside + H2O = a sugar + a thiol.. The catalysed reaction is Hydrolysis of terminal, non-reducing beta-D-glucosyl residues with release of beta-D-glucose.. Its function is as follows. Hydrolyzes sinigrin and, with lower efficiency, p-nitrophenyl beta-D-glucoside. In Arabidopsis thaliana (Mouse-ear cress), this protein is Myrosinase 5.